A 1297-amino-acid chain; its full sequence is Protein ENHANCED DOWNY MILDEW 2 (1297 aa).

Residues 222-281 form a PHD-type 1; degenerate zinc finger; sequence ESVCAICDNGGEILCCEGSCLRSFHATKKDGEDSLCDSLGFNKMQVEAIQKYFCPNCEHK. The Zn(2+) site is built by cysteine 237, cysteine 241, cysteine 275, cysteine 278, cysteine 285, cysteine 288, cysteine 306, cysteine 311, histidine 316, cysteine 319, cysteine 346, and histidine 349. A PHD-type 2; atypical zinc finger spans residues 282–352; the sequence is IHQCFICKNL…EYTCPLHKCS (71 aa). The PHD-type 3; degenerate zinc-finger motif lies at 351-417; it reads CSVCENGEVK…RVLIYCQEHE (67 aa). A Nuclear localization signal 1 motif is present at residues 445-452; it reads QRRILESH. 2 disordered regions span residues 471–547 and 562–598; these read CGKA…ARDA and TQEPNPVKPGRVIPVDSKHNKTDSIASKEPGSEIPTL. A compositionally biased stretch (low complexity) spans 475 to 487; the sequence is SKNSFRSSFPSSK. The Nuclear localization signal 2 motif lies at 492–499; the sequence is TKKHGLVS. Basic and acidic residues predominate over residues 526–547; that stretch reads KMMEDSREAGKNKLGVKEARDA. 2 short sequence motifs (nuclear localization signal) span residues 610 to 617 and 979 to 986; these read MKKATEEI and LKKEGKTK. Basic and acidic residues-rich tracts occupy residues 969–990 and 1096–1109; these read QSDHLSRRSQLKKEGKTKDYSG and EVSRDRPSSVRTSR. Disordered stretches follow at residues 969 to 1017, 1085 to 1109, and 1260 to 1297; these read QSDH…GELS, HGCKVQGTGKPEVSRDRPSSVRTSR, and FPLPPPPPSDFEMSPRGFAPGPNPNYPYMSRSGGWIND.

Interacts with WNK8 in nucleus; this interaction is involved in developmental processes regulation but not in RPP7-dependent disease resistance. Interacts with EML1 and EML2 in nucleus. Component of the ASI1-AIPP1-EDM2 (AAE) RNA regulatory complex composed of at least AIPP1/EDM3, ASI1 and EDM2 and may contain CPL2, AIPP2 and AIPP3/BDT1. Binds directly to AIPP1/EDM3. Co-associates with AIPP1/EDM3 to histone H3 lysine 9 dimethylation (H3K9me2)-marked chromatin and transcripts at a critical proximal polyadenylation site of RPP7 to hamper proximal transcript polyadeylation/termination. In terms of processing, phosphorylated by WNK8.

It localises to the nucleus. Cellular antisilencing factor and regulator of genome DNA methylation patterns involved in the regulation of chromatin states. Together with SUVH4, monitors repressive epigenetic marks H3K27me1, H3K9me2, and prevents DNA-methylation at CHG sites, affecting especially the expression of transposons and developmentally important genes. Collaboratively with ASI1 and AIPP1/EDM3, the AAE complex regulates alternative RNA processing (e.g. alternative splicing) and epigenetic silencing (e.g. H3K9me2) of intronic heterochromatin-containing genes as well as genic heterochromatin-containing genes by promoting distal 3' polyadenylation. Epigenetic reader that binds DNA and contributes to transcriptional transposable element (TE) silencing by modulating levels of the repressive post-translational histone modifications (PHM) H3K9me2. In cv. Columbia, required for RPP7-dependent disease resistance against the Hyaloperonospora arabidopsidis isolate Hiks1, by promoting levels of RPP7 via alternative polyadenylation (APA), resulting from cooption of epigenetic information at the TE insertion locus COPIA-R7. Exhibits a global role in NLR (nucleotide-binding, leucine-rich repeat) defense genes epigenetic (e.g. H3K9me2 hallmarks) expression control; promotes the accumulation of RPP7, RPP4 and some other proteins, but mediates the repression of several other NLR products, probably to compensate for fitness penalties caused by defense mechanisms. Regulates development processes such as the formation of leaf pavement cells, leaf expansion, fertility and flowering. Prevents FLC accumulation to control flowering. Modulates stomatal development by regulating the methylation-mediated silencing of ERECTA receptor genes (e.g. ER, ERL1 and ERL2) and preventing cell divisions. This Arabidopsis thaliana (Mouse-ear cress) protein is Protein ENHANCED DOWNY MILDEW 2.